The following is a 644-amino-acid chain: Pesticidal crystal protein Cry3Aa (644 aa).

A compositionally biased stretch (basic and acidic residues) spans 1–13; the sequence is MNPNNRSEHDTIK. A disordered region spans residues 1–20; it reads MNPNNRSEHDTIKTTENNEV. The propeptide at 1 to 57 is removed in mature form; sequence MNPNNRSEHDTIKTTENNEVPTNHVQYPLAETPNPTLEDLNYKEFLRMTADNNTEAL.

The protein belongs to the delta endotoxin family.

Promotes colloidosmotic lysis by binding to the midgut epithelial cells of Coleoptera. The chain is Pesticidal crystal protein Cry3Aa (cry3Aa) from Bacillus thuringiensis subsp. san diego.